A 265-amino-acid chain; its full sequence is MRHLITISQPAIPQDVTNKDGHKAKKQLRCKGIYPFLWMFFFAAALPLQATQPIEVTRFHKSDMATTGIVNIMPHDPTLRNTLEYQRYTASIARNLTRIGFQVTDNPQQAEYTMMYDVMRGTHYRDNGQTPPRDTRPHGGISLGGGYGGGGGFGGGGVGWGGGGSGISIGGGGGGGRGFGGGGGGISAGISVPVGNGYHTSNKVETILTAQLSRRDTHQAIWEGRARTEAKSNKAESTPDIAVDRLATAMFGQFPGESGETEKVK.

The segment at 122–145 (THYRDNGQTPPRDTRPHGGISLGG) is disordered.

This is an uncharacterized protein from Zymomonas mobilis subsp. mobilis (strain ATCC 31821 / ZM4 / CP4).